The sequence spans 273 residues: MNNRVHQGHLARKRFGQNFLNDQFVIDSIVSAINPQKGQAMVEIGPGLAALTEPVGERLDQLTVIELDRDLAARLQTHPFLGPKLTIYQQDAMTFNFGELAEKMGQPLRVFGNLPYNISTPLMFHLFSYTDAIADMHFMLQKEVVNRLVAGPNSKAYGRLSVMAQYYCNVIPVLEVPPSAFTPPPKVDSAVVRLVPHATMPHPVKDVRVLSRITTEAFNQRRKTIRNSLGNLFSAEVLTGMGIDPAMRAENISVAQYCQMANYLAENAPLQES.

S-adenosyl-L-methionine contacts are provided by asparagine 18, leucine 20, glycine 45, glutamate 66, aspartate 91, and asparagine 113.

Belongs to the class I-like SAM-binding methyltransferase superfamily. rRNA adenine N(6)-methyltransferase family. RsmA subfamily.

It localises to the cytoplasm. It catalyses the reaction adenosine(1518)/adenosine(1519) in 16S rRNA + 4 S-adenosyl-L-methionine = N(6)-dimethyladenosine(1518)/N(6)-dimethyladenosine(1519) in 16S rRNA + 4 S-adenosyl-L-homocysteine + 4 H(+). Functionally, specifically dimethylates two adjacent adenosines (A1518 and A1519) in the loop of a conserved hairpin near the 3'-end of 16S rRNA in the 30S particle. May play a critical role in biogenesis of 30S subunits. The protein is Ribosomal RNA small subunit methyltransferase A of Escherichia coli (strain 55989 / EAEC).